The following is a 259-amino-acid chain: Eukaryotic translation initiation factor 3 subunit J (259 aa).

The span at 1–12 (MAAAAAAAAGDS) shows a compositional bias: low complexity. The sufficient for interaction with EIF3B stretch occupies residues 1–70 (MAAAAAAAAG…KEEAEVKPEV (70 aa)). Residues 1–111 (MAAAAAAAAG…EPEEPKVLTP (111 aa)) are disordered. Residues S12, S14, and S21 each carry the phosphoserine modification. The segment covering 41 to 60 (EGEDEDEDVKDNWDDDDDEK) has biased composition (acidic residues). Over residues 61–107 (KEEAEVKPEVKISEKKKIAEKIKEKERQQKKRQEEIKKRLEEPEEPK) the composition is skewed to basic and acidic residues. Residues 71–136 (KISEKKKIAE…ESDLELAKET (66 aa)) are a coiled coil. A Glycyl lysine isopeptide (Lys-Gly) (interchain with G-Cter in SUMO2) cross-link involves residue K107. At T110 the chain carries Phosphothreonine. S128 carries the post-translational modification Phosphoserine. Residues 218–247 (SKAKKKKKGVVPGGGLKATMKDDLADYGGY) form a disordered region. The segment at 244–259 (YGGYDGGYVQDYEDFM) is promotes stable association with the 40S ribosome. At Y255 the chain carries Phosphotyrosine.

It belongs to the eIF-3 subunit J family. Component of the eukaryotic translation initiation factor 3 (eIF-3) complex, which is composed of 13 subunits: EIF3A, EIF3B, EIF3C, EIF3D, EIF3E, EIF3F, EIF3G, EIF3H, EIF3I, EIF3J, EIF3K, EIF3L and EIF3M. The eIF-3 complex appears to include 3 stable modules: module A is composed of EIF3A, EIF3B, EIF3G and EIF3I; module B is composed of EIF3F, EIF3H, and EIF3M; and module C is composed of EIF3C, EIF3D, EIF3E, EIF3K and EIF3L. EIF3C of module C binds EIF3B of module A and EIF3H of module B, thereby linking the three modules. EIF3J is a labile subunit that binds to the eIF-3 complex via EIF3B. The eIF-3 complex interacts with RPS6KB1 under conditions of nutrient depletion. Mitogenic stimulation leads to binding and activation of a complex composed of MTOR and RPTOR, leading to phosphorylation and release of RPS6KB1 and binding of EIF4B to eIF-3. In terms of processing, phosphorylated. Phosphorylation is enhanced upon serum stimulation.

It localises to the cytoplasm. Component of the eukaryotic translation initiation factor 3 (eIF-3) complex, which is required for several steps in the initiation of protein synthesis. The eIF-3 complex associates with the 40S ribosome and facilitates the recruitment of eIF-1, eIF-1A, eIF-2:GTP:methionyl-tRNAi and eIF-5 to form the 43S pre-initiation complex (43S PIC). The eIF-3 complex stimulates mRNA recruitment to the 43S PIC and scanning of the mRNA for AUG recognition. The eIF-3 complex is also required for disassembly and recycling of post-termination ribosomal complexes and subsequently prevents premature joining of the 40S and 60S ribosomal subunits prior to initiation. The eIF-3 complex specifically targets and initiates translation of a subset of mRNAs involved in cell proliferation, including cell cycling, differentiation and apoptosis, and uses different modes of RNA stem-loop binding to exert either translational activation or repression. This subunit binds directly within the mRNA entry channel of the 40S ribosome to the aminoacyl (A) site. It may regulate the interaction between the 43S PIC and mRNA. This is Eukaryotic translation initiation factor 3 subunit J from Pongo abelii (Sumatran orangutan).